The following is a 140-amino-acid chain: Putative pre-16S rRNA nuclease (140 aa).

It belongs to the YqgF nuclease family.

The protein resides in the cytoplasm. Functionally, could be a nuclease involved in processing of the 5'-end of pre-16S rRNA. In Serratia proteamaculans (strain 568), this protein is Putative pre-16S rRNA nuclease.